Consider the following 416-residue polypeptide: Gamma-glutamyl phosphate reductase (416 aa).

Belongs to the gamma-glutamyl phosphate reductase family.

It localises to the cytoplasm. The catalysed reaction is L-glutamate 5-semialdehyde + phosphate + NADP(+) = L-glutamyl 5-phosphate + NADPH + H(+). The protein operates within amino-acid biosynthesis; L-proline biosynthesis; L-glutamate 5-semialdehyde from L-glutamate: step 2/2. Its function is as follows. Catalyzes the NADPH-dependent reduction of L-glutamate 5-phosphate into L-glutamate 5-semialdehyde and phosphate. The product spontaneously undergoes cyclization to form 1-pyrroline-5-carboxylate. This Salmonella paratyphi C (strain RKS4594) protein is Gamma-glutamyl phosphate reductase.